A 198-amino-acid polypeptide reads, in one-letter code: MIKLIVGLGNPGAEYEATRHNAGFWLVDQLARMGGTTLRVESRFHGLAGRARLWDQDVWLLKPSTFMNRSGLSVVSLARFYKILPDEIVVAHDEMDLPAGSAKLKRGGGSGGHNGLKDISAHLTTQDYWRLRIGVGHPRNAPGGAAGGREDVVNFVLKPPRKEEQQAIDEAIDRCIGPLGTLARGESERAMMELHTGR.

Tyr15 serves as a coordination point for tRNA. The active-site Proton acceptor is the His20. Residues Phe66, Asn68, and Asn114 each coordinate tRNA.

This sequence belongs to the PTH family. In terms of assembly, monomer.

It is found in the cytoplasm. It catalyses the reaction an N-acyl-L-alpha-aminoacyl-tRNA + H2O = an N-acyl-L-amino acid + a tRNA + H(+). In terms of biological role, hydrolyzes ribosome-free peptidyl-tRNAs (with 1 or more amino acids incorporated), which drop off the ribosome during protein synthesis, or as a result of ribosome stalling. Catalyzes the release of premature peptidyl moieties from peptidyl-tRNA molecules trapped in stalled 50S ribosomal subunits, and thus maintains levels of free tRNAs and 50S ribosomes. The polypeptide is Peptidyl-tRNA hydrolase (Cupriavidus metallidurans (strain ATCC 43123 / DSM 2839 / NBRC 102507 / CH34) (Ralstonia metallidurans)).